The sequence spans 436 residues: Transcriptional regulator STP3 (436 aa).

Residues 204–277 (EPLDDEFVPP…TKRKYTKKKQ (74 aa)) are disordered. Positions 230–265 (ISPPASSDSSSSSSYVPQLIPSSSSSVTSNGDSPVS) are enriched in low complexity. Basic residues predominate over residues 268–277 (TKRKYTKKKQ). The C2H2-type zinc finger occupies 315–337 (FDCPSCDASFKVKGYLTRHLKKH).

Activated by the amino acid-induced proteolytic removal of an N-terminal inhibitory domain.

It is found in the cell membrane. Its subcellular location is the nucleus. Functionally, transcription factor that activates genes required for degradation of extracellular protein and uptake of peptides such as the secreted aspartyl protease SAP2 or the oligopeptide transporter OPT1. Required for virulence. Synthesized as latent cytoplasmic precursor, which, upon a signal initiated by the plasma membrane SPS amino acid sensor system (including CSY1 and CSH3), becomes proteolytically activated and relocates to the nucleus, where it induces the expression of SPS-sensor-regulated genes. This is Transcriptional regulator STP3 (STP3) from Candida albicans (strain SC5314 / ATCC MYA-2876) (Yeast).